The primary structure comprises 635 residues: Cationic amino acid transporter 4 (635 aa).

3 helical membrane passes run Leu-42–Val-62, Val-66–Ala-86, and Leu-113–Val-133. N-linked (GlcNAc...) asparagine glycosylation is found at Asn-151 and Asn-195. The chain crosses the membrane as a helical span at residues Thr-197–Ala-217. An N-linked (GlcNAc...) asparagine glycan is attached at Asn-221. The next 5 membrane-spanning stretches (helical) occupy residues Phe-229–Val-249, Leu-270–Leu-290, Gly-318–Phe-338, Gln-365–Leu-385, and Val-391–Val-411. A phosphoserine mark is found at Ser-422 and Ser-427. Residues Val-478–Phe-498 form a helical membrane-spanning segment. An N-linked (GlcNAc...) asparagine glycan is attached at Asn-500. The next 3 membrane-spanning stretches (helical) occupy residues Trp-508 to Leu-528, Leu-539 to Leu-559, and Thr-567 to Ile-587. N-linked (GlcNAc...) asparagine glycosylation is present at Asn-601.

This sequence belongs to the amino acid-polyamine-organocation (APC) superfamily. Cationic amino acid transporter (CAT) (TC 2.A.3.3) family.

Its subcellular location is the membrane. Involved in the transport of the cationic amino acids (arginine, lysine and ornithine). In Homo sapiens (Human), this protein is Cationic amino acid transporter 4 (SLC7A4).